The chain runs to 697 residues: Phenylalanine--tRNA ligase beta subunit, chloroplastic (697 aa).

One can recognise a B5 domain in the interval 283–368; that stretch reads NISRILFIDK…RIYGFDNFIS (86 aa). Aspartate 346, aspartate 352, glutamate 355, and glutamate 356 together coordinate Mg(2+). Positions 609–697 constitute an FDX-ACB domain; that stretch reads SSYPSLTRDI…IDDLLNEYKL (89 aa).

Belongs to the phenylalanyl-tRNA synthetase beta subunit family. Type 1 subfamily. Tetramer of two alpha and two beta subunits. The cofactor is Mg(2+).

It localises to the plastid. The protein resides in the chloroplast. It carries out the reaction tRNA(Phe) + L-phenylalanine + ATP = L-phenylalanyl-tRNA(Phe) + AMP + diphosphate + H(+). The polypeptide is Phenylalanine--tRNA ligase beta subunit, chloroplastic (Gracilaria tenuistipitata var. liui (Red alga)).